We begin with the raw amino-acid sequence, 385 residues long: Glucose-fructose oxidoreductase domain-containing protein 2 (385 aa).

Positions Met-1 to Ala-25 are cleaved as a signal peptide.

The protein belongs to the Gfo/Idh/MocA family.

The protein localises to the secreted. It localises to the extracellular space. Its subcellular location is the extracellular matrix. Promotes matrix assembly. This is Glucose-fructose oxidoreductase domain-containing protein 2 (Gfod2) from Mus musculus (Mouse).